A 373-amino-acid polypeptide reads, in one-letter code: Enoyl-[acyl-carrier-protein] reductase, mitochondrial (373 aa).

A mitochondrion-targeting transit peptide spans 1–53 (MWVCSTLWRVRTPARQWRGLLPASGCHGPAASSYSASAEPARVRALVYGHHGD). Lys61 carries the post-translational modification N6-acetyllysine; alternate. Position 61 is an N6-succinyllysine; alternate (Lys61). Catalysis depends on Tyr94, which acts as the Proton donor. Residues Asn167, 193-196 (NSGV), and 216-218 (RDR) contribute to the NADP(+) site. Residues Lys252 and Lys267 each carry the N6-acetyllysine; alternate modification. 2 positions are modified to N6-succinyllysine; alternate: Lys252 and Lys267. Residues 285 to 288 (YGGM) and 310 to 312 (FWL) each bind NADP(+). Lys316 is subject to N6-succinyllysine. Lys368 is a binding site for NADP(+).

Belongs to the zinc-containing alcohol dehydrogenase family. Quinone oxidoreductase subfamily. As to quaternary structure, homodimer. Isoform 2 interacts with PPARA in the nucleus and increases its activity. Highly expressed in skeletal and heart muscle. Expressed at lower level in placenta, liver, kidney and pancreas. Weakly or not expressed in lung.

It is found in the mitochondrion. Its subcellular location is the cytoplasm. The protein resides in the nucleus. The enzyme catalyses a 2,3-saturated acyl-[ACP] + NADP(+) = a (2E)-enoyl-[ACP] + NADPH + H(+). It catalyses the reaction (2E)-butenoyl-[ACP] + NADPH + H(+) = butanoyl-[ACP] + NADP(+). The catalysed reaction is (2E)-hexenoyl-[ACP] + NADPH + H(+) = hexanoyl-[ACP] + NADP(+). It carries out the reaction (2E)-octenoyl-[ACP] + NADPH + H(+) = octanoyl-[ACP] + NADP(+). The enzyme catalyses (2E)-decenoyl-[ACP] + NADPH + H(+) = decanoyl-[ACP] + NADP(+). It catalyses the reaction (2E)-dodecenoyl-[ACP] + NADPH + H(+) = dodecanoyl-[ACP] + NADP(+). The catalysed reaction is (2E)-tetradecenoyl-[ACP] + NADPH + H(+) = tetradecanoyl-[ACP] + NADP(+). It carries out the reaction (2E)-hexadecenoyl-[ACP] + NADPH + H(+) = hexadecanoyl-[ACP] + NADP(+). Functionally, catalyzes the NADPH-dependent reduction of trans-2-enoyl thioesters in mitochondrial fatty acid synthesis (fatty acid synthesis type II). Fatty acid chain elongation in mitochondria uses acyl carrier protein (ACP) as an acyl group carrier, but the enzyme accepts both ACP and CoA thioesters as substrates in vitro. Displays a preference for medium-chain over short- and long-chain substrates. May provide the octanoyl chain used for lipoic acid biosynthesis, regulating protein lipoylation and mitochondrial respiratory activity particularly in Purkinje cells. Involved in iron homeostasis; affecting Fe-S cluster assembly and ceramide metabolism. Required for proper morphology and bioenergetic functions of mitochondria. Required for maintenance of neurons. This chain is Enoyl-[acyl-carrier-protein] reductase, mitochondrial (MECR), found in Homo sapiens (Human).